Reading from the N-terminus, the 265-residue chain is tRNA pseudouridine synthase A (265 aa).

Residue aspartate 58 is the Nucleophile of the active site. Tyrosine 116 serves as a coordination point for substrate.

Belongs to the tRNA pseudouridine synthase TruA family. As to quaternary structure, homodimer.

It carries out the reaction uridine(38/39/40) in tRNA = pseudouridine(38/39/40) in tRNA. Its function is as follows. Formation of pseudouridine at positions 38, 39 and 40 in the anticodon stem and loop of transfer RNAs. The protein is tRNA pseudouridine synthase A of Neisseria meningitidis serogroup B (strain ATCC BAA-335 / MC58).